A 264-amino-acid chain; its full sequence is Zinc import ATP-binding protein ZnuC (264 aa).

An ABC transporter domain is found at 11–226 (IELKGVNVTF…PVFIRFFGNQ (216 aa)). 43 to 50 (GPNGGGKS) is a binding site for ATP.

The protein belongs to the ABC transporter superfamily. Zinc importer (TC 3.A.1.15.5) family. In terms of assembly, the complex is composed of two ATP-binding proteins (ZnuC), two transmembrane proteins (ZnuB) and a solute-binding protein (ZnuA).

The protein resides in the cell inner membrane. It carries out the reaction Zn(2+)(out) + ATP(in) + H2O(in) = Zn(2+)(in) + ADP(in) + phosphate(in) + H(+)(in). In terms of biological role, part of the ABC transporter complex ZnuABC involved in zinc import. Responsible for energy coupling to the transport system. The sequence is that of Zinc import ATP-binding protein ZnuC from Histophilus somni (strain 129Pt) (Haemophilus somnus).